The primary structure comprises 224 residues: UPF0758 protein IL0240 (224 aa).

Positions 102-224 (GFTEPTMVKD…PISFAERGLL (123 aa)) constitute an MPN domain. 3 residues coordinate Zn(2+): histidine 173, histidine 175, and aspartate 186. The JAMM motif signature appears at 173–186 (HNHPSGVAEPSQAD).

Belongs to the UPF0758 family.

In Idiomarina loihiensis (strain ATCC BAA-735 / DSM 15497 / L2-TR), this protein is UPF0758 protein IL0240.